Here is a 121-residue protein sequence, read N- to C-terminus: Small ribosomal subunit protein uS13 (121 aa).

The disordered stretch occupies residues G94–K121. The span at S106–K121 shows a compositional bias: basic residues.

The protein belongs to the universal ribosomal protein uS13 family. As to quaternary structure, part of the 30S ribosomal subunit. Forms a loose heterodimer with protein S19. Forms two bridges to the 50S subunit in the 70S ribosome.

Located at the top of the head of the 30S subunit, it contacts several helices of the 16S rRNA. In the 70S ribosome it contacts the 23S rRNA (bridge B1a) and protein L5 of the 50S subunit (bridge B1b), connecting the 2 subunits; these bridges are implicated in subunit movement. Contacts the tRNAs in the A and P-sites. The chain is Small ribosomal subunit protein uS13 from Halalkalibacterium halodurans (strain ATCC BAA-125 / DSM 18197 / FERM 7344 / JCM 9153 / C-125) (Bacillus halodurans).